We begin with the raw amino-acid sequence, 141 residues long: Large ribosomal subunit protein uL11 (141 aa).

Belongs to the universal ribosomal protein uL11 family. In terms of assembly, part of the ribosomal stalk of the 50S ribosomal subunit. Interacts with L10 and the large rRNA to form the base of the stalk. L10 forms an elongated spine to which L12 dimers bind in a sequential fashion forming a multimeric L10(L12)X complex. Post-translationally, one or more lysine residues are methylated.

Its function is as follows. Forms part of the ribosomal stalk which helps the ribosome interact with GTP-bound translation factors. This chain is Large ribosomal subunit protein uL11, found in Prochlorococcus marinus (strain SARG / CCMP1375 / SS120).